Consider the following 796-residue polypeptide: Histone-lysine N-methyltransferase PRDM9 (796 aa).

A disordered region spans residues 1–23 (MSRTMNTNKPEENSTEGDAGKLE). In terms of domain architecture, KRAB-related spans 27–90 (KVKDEFKDIS…QRQAIKPQIN (64 aa)). The disordered stretch occupies residues 149-172 (SEHAQKPVCSPEEGNTSGQHFGKK). Residues Cys-209, Cys-212, Cys-220, and His-223 each coordinate Zn(2+). Positions 248-362 (PGLRIGPSGI…PGRELLVWYG (115 aa)) constitute an SET domain. Residues 260-262 (AGL), Tyr-295, and 324-325 (NC) each bind S-adenosyl-L-methionine. A substrate-binding site is contributed by 292–298 (NSGYSWL). Residue Tyr-361 participates in substrate binding. The residue at position 372 (Lys-372) is an N6,N6,N6-trimethyllysine; alternate. The residue at position 372 (Lys-372) is an N6-methyllysine; alternate. N6-methyllysine is present on residues Lys-376 and Lys-378. The C2H2-type 1 zinc finger occupies 392 to 415 (HPCFLCSLAFSSQKFLTQHVEWNH). Zn(2+)-binding residues include Cys-394, Cys-397, His-410, and His-415. Basic and acidic residues predominate over residues 443-457 (FDSQNKNDKASNEVK). The segment at 443–497 (FDSQNKNDKASNEVKRKSKPRHKWTRQRISTAFSSTLKEQMRSEESKRTVEEELR) is disordered. Positions 458-468 (RKSKPRHKWTR) are enriched in basic residues. A compositionally biased stretch (polar residues) spans 469 to 480 (QRISTAFSSTLK). Positions 481-497 (EQMRSEESKRTVEEELR) are enriched in basic and acidic residues. The C2H2-type 2; degenerate zinc-finger motif lies at 522–540 (QCGQCFSDKSNVSEHQRTH). 9 C2H2-type zinc fingers span residues 546-568 (YICR…QRTH), 574-596 (YICR…QRTH), 602-624 (YICR…QRTH), 630-652 (YICR…QRTH), 658-680 (YICR…QRTH), 686-708 (YICR…LRTH), 714-736 (YICR…QRTH), 742-764 (YICR…QRTH), and 770-792 (YICR…QRTH). The Zn(2+) site is built by Cys-716, Cys-719, His-732, His-736, Cys-744, Cys-747, His-760, His-764, Cys-772, Cys-775, His-788, and His-792.

This sequence belongs to the class V-like SAM-binding methyltransferase superfamily. In terms of assembly, homodimer. Interacts with EHMT2 and CDYL; interaction only takes place when PRDM9 is bound to hotspot DNA. Interacts with CXXC1; this interaction does not link PRDM9-activated recombination hotspot sites with DSB machinery and is not required for the hotspot recognition pathway. Forms a complex with EWSR1, REC8, SYCP3 and SYCP1; complex formation is dependent of phosphorylated form of REC8 and requires PRDM9 bound to hotspot DNA; EWSR1 joins PRDM9 with the chromosomal axis through REC8. In terms of processing, mono-methylated; automethylated. Tri-methylated; automethylated. Mono-methylation is predominant; automethylation is lower and slower than H3 peptide methylation and is in a highest S-adenosyl-L-methionine concentration-dependent. There are two major sites for automethylation at Lys-372 and Lys-378. Lysines can be simultaneously methylated, such as Lys-372(me3)/Lys-376(me1), Lys-372(me1)/Lys-378(me1) and Lys-372(me1)/Lys-376(me1)/Lys-378(me1). Automethylation is an intramolecular (cis) process.

It is found in the nucleus. It localises to the chromosome. The enzyme catalyses L-lysyl-[protein] + S-adenosyl-L-methionine = N(6)-methyl-L-lysyl-[protein] + S-adenosyl-L-homocysteine + H(+). It carries out the reaction N(6)-methyl-L-lysyl-[protein] + S-adenosyl-L-methionine = N(6),N(6)-dimethyl-L-lysyl-[protein] + S-adenosyl-L-homocysteine + H(+). The catalysed reaction is L-lysyl(4)-[histone H3] + 3 S-adenosyl-L-methionine = N(6),N(6),N(6)-trimethyl-L-lysyl(4)-[histone H3] + 3 S-adenosyl-L-homocysteine + 3 H(+). It catalyses the reaction L-lysyl(36)-[histone H3] + 3 S-adenosyl-L-methionine = N(6),N(6),N(6)-trimethyl-L-lysyl(36)-[histone H3] + 3 S-adenosyl-L-homocysteine + 3 H(+). The enzyme catalyses L-lysyl(9)-[histone H3] + 3 S-adenosyl-L-methionine = N(6),N(6),N(6)-trimethyl-L-lysyl(9)-[histone H3] + 3 S-adenosyl-L-homocysteine + 3 H(+). It carries out the reaction L-lysyl(20)-[histone H4] + S-adenosyl-L-methionine = N(6)-methyl-L-lysyl(20)-[histone H4] + S-adenosyl-L-homocysteine + H(+). The catalysed reaction is N(6)-methyl-L-lysyl(20)-[histone H4] + S-adenosyl-L-methionine = N(6),N(6)-dimethyl-L-lysyl(20)-[histone H4] + S-adenosyl-L-homocysteine + H(+). Functionally, histone methyltransferase that sequentially mono-, di-, and tri-methylates both 'Lys-4' (H3K4) and 'Lys-36' (H3K36) of histone H3 to produce respectively trimethylated 'Lys-4' (H3K4me3) and trimethylated 'Lys-36' (H3K36me3) histone H3 and plays a key role in meiotic prophase by determining hotspot localization thereby promoting meiotic recombination. Can also methylate all four core histones with H3 being the best substrate and the most highly modified. Is also able, on one hand, to mono and di-methylate H4K20 and on other hand to trimethylate H3K9 with the di-methylated H3K9 as the best substrate. During meiotic prophase, binds specific DNA sequences through its zinc finger domains thereby determining hotspot localization where it promotes local H3K4me3 and H3K36me3 enrichment on the same nucleosomes through its histone methyltransferase activity. Thereby promotes double-stranded breaks (DSB) formation, at this subset of PRDM9-binding sites, that initiates meiotic recombination for the proper meiotic progression. During meiotic progression hotspot-bound PRDM9 interacts with several complexes; in early leptonema binds CDYL and EHMT2 followed by EWSR1 and CXXC1 by the end of leptonema. EWSR1 joins PRDM9 with the chromosomal axis through REC8. In this way, controls the DSB repair pathway, pairing of homologous chromosomes and sex body formation. Moreover plays a central role in the transcriptional activation of genes during early meiotic prophase thanks to H3K4me3 and H3K36me3 enrichment that represents a specific tag for epigenetic transcriptional activation. In addition performs automethylation. Acetylation and phosphorylation of histone H3 attenuate or prevent histone H3 methylation. In Rattus norvegicus (Rat), this protein is Histone-lysine N-methyltransferase PRDM9.